The primary structure comprises 222 residues: Thiopurine S-methyltransferase (222 aa).

Residues Trp-10, Leu-45, Glu-66, and Arg-126 each contribute to the S-adenosyl-L-methionine site.

This sequence belongs to the class I-like SAM-binding methyltransferase superfamily. TPMT family.

The protein resides in the cytoplasm. It catalyses the reaction S-adenosyl-L-methionine + a thiopurine = S-adenosyl-L-homocysteine + a thiopurine S-methylether.. The protein is Thiopurine S-methyltransferase of Shewanella piezotolerans (strain WP3 / JCM 13877).